A 272-amino-acid chain; its full sequence is Shikimate dehydrogenase (NADP(+)) (272 aa).

Shikimate contacts are provided by residues 14 to 16 and T61; that span reads SLS. The Proton acceptor role is filled by K65. D102 contributes to the shikimate binding site. NADP(+)-binding positions include 127 to 131, 151 to 156, and L215; these read GAGGA and NRTPSK. Y217 serves as a coordination point for shikimate. Position 239 (G239) interacts with NADP(+).

The protein belongs to the shikimate dehydrogenase family. In terms of assembly, homodimer.

The catalysed reaction is shikimate + NADP(+) = 3-dehydroshikimate + NADPH + H(+). The protein operates within metabolic intermediate biosynthesis; chorismate biosynthesis; chorismate from D-erythrose 4-phosphate and phosphoenolpyruvate: step 4/7. Involved in the biosynthesis of the chorismate, which leads to the biosynthesis of aromatic amino acids. Catalyzes the reversible NADPH linked reduction of 3-dehydroshikimate (DHSA) to yield shikimate (SA). The chain is Shikimate dehydrogenase (NADP(+)) from Coxiella burnetii (strain Dugway 5J108-111).